The following is a 354-amino-acid chain: Phenylalanine 4-monooxygenase, chloroplastic (354 aa).

The transit peptide at 1–60 directs the protein to the chloroplast; it reads MAFPLQKTFLCSNGQSFPCSNGRSTSTLLASDLKFQRLNKPFILRVGSMQIRNSPKEHPR. 3 residues coordinate Fe cation: H229, H234, and E274.

This sequence belongs to the biopterin-dependent aromatic amino acid hydroxylase family. Forms monomers. Fe(2+) is required as a cofactor.

The protein resides in the plastid. The protein localises to the chloroplast. It catalyses the reaction (6R)-L-erythro-5,6,7,8-tetrahydrobiopterin + L-phenylalanine + O2 = (4aS,6R)-4a-hydroxy-L-erythro-5,6,7,8-tetrahydrobiopterin + L-tyrosine. Its function is as follows. Catalyzes the hydroxylation of L-phenylalanine to L-tyrosine. Does not seem to be tetrahydropterin-dependent and shows preference for 10-formyltetrahydrofolate as cosubstrate and electron donor. The sequence is that of Phenylalanine 4-monooxygenase, chloroplastic from Pinus taeda (Loblolly pine).